The primary structure comprises 574 residues: Cytochrome P450 306a1 (574 aa).

Residues 303 to 314 show a composition bias toward basic and acidic residues; it reads EKEQLRQSKEAD. The disordered stretch occupies residues 303–333; it reads EKEQLRQSKEADPSQEQSEADEDDEESDEED. The span at 320–333 shows a compositional bias: acidic residues; the sequence is SEADEDDEESDEED. Position 505 (C505) interacts with heme.

This sequence belongs to the cytochrome P450 family. Heme serves as cofactor. First seen at the early (syncytial) blastoderm stage 4. During cellularization of the blastoderm (stage 5), stripes of expression appear and remain through to stage 10. Expression becomes undetectable during germ band retraction (stages 11-14). By stage 15, some expression resumes in the primordium of the ring gland, so that by stage 17 strong expression is seen, but only in the ring gland. This specific localization continues throughout the larval instars (at protein level). Expressed in the prothoracic gland cells of the larval ring gland (RG). Levels decline just after the molt to the third instar then increase later during the wandering stage. Low levels of expression are seen in the larval brain and fat body. In the adult, majority of expression is restricted to the ovaries, with low levels in the head and carcass of both sexes.

The protein localises to the endoplasmic reticulum membrane. It is found in the microsome membrane. It carries out the reaction 2,22,25-trideoxyecdysone + 2 reduced [adrenodoxin] + O2 + 2 H(+) = 2,22-dideoxyecdysone + 2 oxidized [adrenodoxin] + H2O. Its pathway is steroid biosynthesis; ecdysteroid biosynthesis. In terms of biological role, involved in the metabolism of insect hormones; responsible for ecdysteroid C25-hydroxylase activity. May be involved in the breakdown of synthetic insecticides. In Drosophila melanogaster (Fruit fly), this protein is Cytochrome P450 306a1.